The following is a 1565-amino-acid chain: Major cell-surface adhesin PAc (1565 aa).

The first 38 residues, 1 to 38 (MKVKKTYGFRKSKISKTLCGAVLGTVAAVSVAGQKVFA), serve as a signal peptide directing secretion. Low complexity predominate over residues 42 to 54 (TTTSDVDTKVVGT). Positions 42-81 (TTTSDVDTKVVGTQTGNPATNLPEAQGSASKEAEQSQTKL) are disordered. The span at 72–81 (KEAEQSQTKL) shows a compositional bias: basic and acidic residues. Ag I/II A repeat units lie at residues 146–220 (KKTT…QKTN), 221–302 (AANQ…QEAN), 303–384 (AANE…KKAN), and 385–466 (AANE…QKDL). Residues 203–448 (EAKLAQYQAD…KRNADAKADY (246 aa)) form a heptad repeats of Y-[EQ]-X-X-L-A-X region. Residues 461–834 (KYQKDLADYP…VNVPKVTKEK (374 aa)) are V-region (lectin-like). Disordered regions lie at residues 827–985 (VPKV…PTPP) and 1486–1511 (NTVK…PRTS). One copy of the P1 repeat lies at 848–887 (TYETEKPLKPAPVAPNYEKEPTPPTRTPDQAEPNKPTPPT). One copy of the P2 repeat lies at 888–926 (YETEKPLEPAPVEPSYEAEPTPPTRTPDQAEPNKPTPPT). One copy of the P3 repeat lies at 927 to 964 (YETEKPLEPAPVEPSYEAEPTPPTPTPDQPEPNKPVEP). Positions 946–961 (PTPPTPTPDQPEPNKP) are enriched in pro residues. Residues 1532-1536 (LPNTG) carry the LPXTG sorting signal motif. Position 1535 is a pentaglycyl murein peptidoglycan amidated threonine (T1535). A propeptide spans 1536-1565 (GVTNNAYMPLLGIIGLVTSFSLLGLKAKKD) (removed by sortase).

The protein belongs to the antigen I/II family.

The protein localises to the secreted. It localises to the cell wall. Its function is as follows. Surface protein antigen implicated in dental caries. This chain is Major cell-surface adhesin PAc, found in Streptococcus mutans.